Reading from the N-terminus, the 1517-residue chain is DNA-directed RNA polymerase subunit beta' (1517 aa).

4 residues coordinate Zn(2+): Cys71, Cys73, Cys86, and Cys89. Residues Asp482, Asp484, and Asp486 each contribute to the Mg(2+) site. Zn(2+) is bound by residues Cys812, Cys886, Cys893, and Cys896.

Belongs to the RNA polymerase beta' chain family. The RNAP catalytic core consists of 2 alpha, 1 beta, 1 beta' and 1 omega subunit. When a sigma factor is associated with the core the holoenzyme is formed, which can initiate transcription. Requires Mg(2+) as cofactor. Zn(2+) is required as a cofactor.

It carries out the reaction RNA(n) + a ribonucleoside 5'-triphosphate = RNA(n+1) + diphosphate. Functionally, DNA-dependent RNA polymerase catalyzes the transcription of DNA into RNA using the four ribonucleoside triphosphates as substrates. The chain is DNA-directed RNA polymerase subunit beta' from Campylobacter jejuni (strain RM1221).